The following is a 102-amino-acid chain: Circadian clock protein KaiB3 (102 aa).

This sequence belongs to the KaiB family. As to quaternary structure, purifies as a monomer and homotetramer. Interacts with KaiC1 and KaiC3.

A paralog of KaiB1, the major clock oscillator protein in this species. KaiB3 and KaiC3 may cross talk with the core oscillator. The monomer reduces the ATPase activity of KaiC3 by 55%, the homotetramer has no effect. Functionally, a metamorphic protein which may reversibly switch between an inactive tetrameric fold and a rare thioredoxin-like monomeric fold (KaiB(fs)). This Synechocystis sp. (strain ATCC 27184 / PCC 6803 / Kazusa) protein is Circadian clock protein KaiB3.